Reading from the N-terminus, the 690-residue chain is DNA ligase (690 aa).

Residues 43–47 (DAEYD), 92–93 (SI), and glutamate 129 contribute to the NAD(+) site. Lysine 131 serves as the catalytic N6-AMP-lysine intermediate. NAD(+) contacts are provided by arginine 152, glutamate 188, lysine 309, and lysine 333. Residues cysteine 427, cysteine 430, cysteine 445, and cysteine 451 each coordinate Zn(2+). In terms of domain architecture, BRCT spans 610–690 (VTPTPLSGKT…GLKELLDGHS (81 aa)).

Belongs to the NAD-dependent DNA ligase family. LigA subfamily. Mg(2+) serves as cofactor. Mn(2+) is required as a cofactor.

The enzyme catalyses NAD(+) + (deoxyribonucleotide)n-3'-hydroxyl + 5'-phospho-(deoxyribonucleotide)m = (deoxyribonucleotide)n+m + AMP + beta-nicotinamide D-nucleotide.. Functionally, DNA ligase that catalyzes the formation of phosphodiester linkages between 5'-phosphoryl and 3'-hydroxyl groups in double-stranded DNA using NAD as a coenzyme and as the energy source for the reaction. It is essential for DNA replication and repair of damaged DNA. The sequence is that of DNA ligase from Albidiferax ferrireducens (strain ATCC BAA-621 / DSM 15236 / T118) (Rhodoferax ferrireducens).